Consider the following 76-residue polypeptide: uncharacterized protein (76 aa).

Residues 1–15 (MYLPLLLFCVISCYG) form the signal peptide.

This is an uncharacterized protein from Magallana gigas (Pacific oyster).